Reading from the N-terminus, the 155-residue chain is MSKETKLQVEAIKNGTVIDHIPAKVGIKVLKLFDMHNSAQRVTIGLNLPSSALGSKDLLKIENVFISEAQANKLALYAPHATVNQIENYEVVKKLALQLPERINNVFACPNSNCISHNEPVESSFKLSEKNNDIRLKCKYCEKVFARDVVTEIEA.

The Zn(2+) site is built by Cys-109, Cys-114, Cys-138, and Cys-141.

This sequence belongs to the PyrI family. In terms of assembly, contains catalytic and regulatory chains. Zn(2+) is required as a cofactor.

Its function is as follows. Involved in allosteric regulation of aspartate carbamoyltransferase. This chain is Aspartate carbamoyltransferase regulatory chain, found in Vibrio cholerae serotype O1 (strain ATCC 39315 / El Tor Inaba N16961).